Here is a 536-residue protein sequence, read N- to C-terminus: Lysosomal acid glucosylceramidase (536 aa).

A signal peptide spans 1 to 39 (MELSSPSREECPRPQGRVGIMAASLMGLLLLQAASWASG). 2 disulfides stabilise this stretch: C43/C55 and C57/C62. N-linked (GlcNAc...) asparagine glycosylation is found at N58, N98, and N185. The active-site Proton donor is the E274. A glycan (N-linked (GlcNAc...) asparagine) is linked at N309. Catalysis depends on E379, which acts as the Nucleophile. A glycan (N-linked (GlcNAc...) asparagine) is linked at N501.

It belongs to the glycosyl hydrolase 30 family. Interacts with saposin-C. Interacts with SCARB2. Interacts with TCP1. Interacts with GRN; this interaction prevents aggregation of GBA1-SCARB2 complex via interaction with HSPA1A upon stress.

The protein resides in the lysosome membrane. The catalysed reaction is a beta-D-glucosyl-(1&lt;-&gt;1')-N-acylsphing-4-enine + H2O = an N-acylsphing-4-enine + D-glucose. The enzyme catalyses a beta-D-galactosyl-(1&lt;-&gt;1')-N-acylsphing-4-enine + H2O = an N-acylsphing-4-enine + D-galactose. It catalyses the reaction cholesteryl 3-beta-D-glucoside + H2O = cholesterol + D-glucose. It carries out the reaction a beta-D-glucosyl-(1&lt;-&gt;1')-N-acylsphing-4-enine + cholesterol = cholesteryl 3-beta-D-glucoside + an N-acylsphing-4-enine. The catalysed reaction is beta-D-glucosyl-N-(9Z-octadecenoyl)-sphing-4E-enine + cholesterol = N-(9Z-octadecenoyl)-sphing-4-enine + cholesteryl 3-beta-D-glucoside. The enzyme catalyses beta-D-glucosyl-N-octanoylsphing-4E-enine + cholesterol = N-octanoylsphing-4-enine + cholesteryl 3-beta-D-glucoside. It catalyses the reaction beta-D-glucosyl-N-dodecanoylsphing-4-enine + cholesterol = N-dodecanoylsphing-4-enine + cholesteryl 3-beta-D-glucoside. It carries out the reaction beta-D-glucosyl-(1&lt;-&gt;1)-N-octadecanoylsphing-4-enine + cholesterol = N-octadecanoylsphing-4-enine + cholesteryl 3-beta-D-glucoside. The catalysed reaction is beta-D-glucosyl-(1&lt;-&gt;1')-N-(15Z-tetracosenoyl)-sphing-4-enine + cholesterol = N-(15Z-tetracosenoyl)-sphing-4-enine + cholesteryl 3-beta-D-glucoside. The enzyme catalyses a beta-D-galactosyl-(1&lt;-&gt;1')-N-acylsphing-4-enine + cholesterol = cholesteryl 3-beta-D-galactoside + an N-acylsphing-4-enine. It catalyses the reaction 1-(beta-D-galactosyl)-N-dodecanoylsphing-4-enine + cholesterol = cholesteryl 3-beta-D-galactoside + N-dodecanoylsphing-4-enine. It carries out the reaction a beta-D-xylosyl-(1&lt;-&gt;1')-N-acylsphing-4-enine + cholesterol = cholesteryl 3-beta-D-xyloside + an N-acylsphing-4-enine. The catalysed reaction is beta-D-xylosyl-(1&lt;-&gt;1')-N-(9Z-octadecenoyl)-sphing-4-enine + cholesterol = cholesteryl 3-beta-D-xyloside + N-(9Z-octadecenoyl)-sphing-4-enine. Its pathway is steroid metabolism; cholesterol metabolism. The protein operates within sphingolipid metabolism. In terms of biological role, glucosylceramidase that catalyzes, within the lysosomal compartment, the hydrolysis of glucosylceramides/GlcCers (such as beta-D-glucosyl-(1&lt;-&gt;1')-N-acylsphing-4-enine) into free ceramides (such as N-acylsphing-4-enine) and glucose. Plays a central role in the degradation of complex lipids and the turnover of cellular membranes. Through the production of ceramides, participates in the PKC-activated salvage pathway of ceramide formation. Catalyzes the glucosylation of cholesterol, through a transglucosylation reaction where glucose is transferred from GlcCer to cholesterol. GlcCer containing mono-unsaturated fatty acids (such as beta-D-glucosyl-N-(9Z-octadecenoyl)-sphing-4-enine) are preferred as glucose donors for cholesterol glucosylation when compared with GlcCer containing same chain length of saturated fatty acids (such as beta-D-glucosyl-N-octadecanoyl-sphing-4-enine). Under specific conditions, may alternatively catalyze the reverse reaction, transferring glucose from cholesteryl 3-beta-D-glucoside to ceramide. Can also hydrolyze cholesteryl 3-beta-D-glucoside producing glucose and cholesterol. Catalyzes the hydrolysis of galactosylceramides/GalCers (such as beta-D-galactosyl-(1&lt;-&gt;1')-N-acylsphing-4-enine), as well as the transfer of galactose between GalCers and cholesterol in vitro, but with lower activity than with GlcCers. Contrary to GlcCer and GalCer, xylosylceramide/XylCer (such as beta-D-xyosyl-(1&lt;-&gt;1')-N-acylsphing-4-enine) is not a good substrate for hydrolysis, however it is a good xylose donor for transxylosylation activity to form cholesteryl 3-beta-D-xyloside. The protein is Lysosomal acid glucosylceramidase (GBA1) of Sus scrofa (Pig).